The chain runs to 416 residues: Serine hydroxymethyltransferase (416 aa).

(6S)-5,6,7,8-tetrahydrofolate is bound by residues L118 and G122–L124. N6-(pyridoxal phosphate)lysine is present on K226. Position 242 (E242) interacts with (6S)-5,6,7,8-tetrahydrofolate.

The protein belongs to the SHMT family. In terms of assembly, homodimer. Pyridoxal 5'-phosphate is required as a cofactor.

Its subcellular location is the cytoplasm. The catalysed reaction is (6R)-5,10-methylene-5,6,7,8-tetrahydrofolate + glycine + H2O = (6S)-5,6,7,8-tetrahydrofolate + L-serine. It participates in one-carbon metabolism; tetrahydrofolate interconversion. The protein operates within amino-acid biosynthesis; glycine biosynthesis; glycine from L-serine: step 1/1. Functionally, catalyzes the reversible interconversion of serine and glycine with tetrahydrofolate (THF) serving as the one-carbon carrier. This reaction serves as the major source of one-carbon groups required for the biosynthesis of purines, thymidylate, methionine, and other important biomolecules. Also exhibits THF-independent aldolase activity toward beta-hydroxyamino acids, producing glycine and aldehydes, via a retro-aldol mechanism. This Helicobacter pylori (strain HPAG1) protein is Serine hydroxymethyltransferase.